The primary structure comprises 131 residues: Ribonuclease P protein component (131 aa).

It belongs to the RnpA family. In terms of assembly, consists of a catalytic RNA component (M1 or rnpB) and a protein subunit.

The catalysed reaction is Endonucleolytic cleavage of RNA, removing 5'-extranucleotides from tRNA precursor.. Functionally, RNaseP catalyzes the removal of the 5'-leader sequence from pre-tRNA to produce the mature 5'-terminus. It can also cleave other RNA substrates such as 4.5S RNA. The protein component plays an auxiliary but essential role in vivo by binding to the 5'-leader sequence and broadening the substrate specificity of the ribozyme. This is Ribonuclease P protein component from Cyanothece sp. (strain PCC 7425 / ATCC 29141).